Here is a 306-residue protein sequence, read N- to C-terminus: MSTLGHQYDNSLVSNAFGFLRLPMNFQPYDSDADWVITGVPFDMATSGRAGGRHGPAAIRQVSTNLAWEHHRFPWNFDMRERLNVVDCGDLVYAFGDAREMSEKLQAHAEKLLSAGKRMLSFGGDHFVTLPLLRAHAKHFGKMALVHFDAHTDTYANGCEFDHGTMFYTAPKEGLIDPHHSVQIGIRTEFDKDNGFTVLDACQVNDRGVDDILAQVKQIVGDMPVYLTFDIDCLDPAFAPGTGTPVIGGLTSDRAIKLVRGLKDLNIVGMDVVEVAPAYDQSEITALAAATLALEMLYIQAAKKGE.

Residues histidine 126, aspartate 149, histidine 151, aspartate 153, aspartate 230, and aspartate 232 each coordinate Mn(2+).

The protein belongs to the arginase family. Agmatinase subfamily. Mn(2+) is required as a cofactor.

The enzyme catalyses agmatine + H2O = urea + putrescine. The protein operates within amine and polyamine biosynthesis; putrescine biosynthesis via agmatine pathway; putrescine from agmatine: step 1/1. Catalyzes the formation of putrescine from agmatine. The polypeptide is Agmatinase (Salmonella agona (strain SL483)).